A 217-amino-acid polypeptide reads, in one-letter code: 3,4-dihydroxy-2-butanone 4-phosphate synthase (217 aa).

Residues 37 to 38, aspartate 42, 150 to 154, and glutamate 174 contribute to the D-ribulose 5-phosphate site; these read RE and RRGHT. Residue glutamate 38 participates in Mg(2+) binding. Histidine 153 lines the Mg(2+) pocket.

It belongs to the DHBP synthase family. As to quaternary structure, homodimer. The cofactor is Mg(2+). Requires Mn(2+) as cofactor.

It carries out the reaction D-ribulose 5-phosphate = (2S)-2-hydroxy-3-oxobutyl phosphate + formate + H(+). Its pathway is cofactor biosynthesis; riboflavin biosynthesis; 2-hydroxy-3-oxobutyl phosphate from D-ribulose 5-phosphate: step 1/1. Catalyzes the conversion of D-ribulose 5-phosphate to formate and 3,4-dihydroxy-2-butanone 4-phosphate. The sequence is that of 3,4-dihydroxy-2-butanone 4-phosphate synthase from Shewanella putrefaciens (strain CN-32 / ATCC BAA-453).